Reading from the N-terminus, the 286-residue chain is MQNEPMFQVQVDESEDSEWNDILRAKGVIPERAPSPTAKLEEALEEAIAKQHENRLEDKDLSDLEELEDDEDEDFLEAYKIKRLNEIRKLQERSKFGEVFHINKPEYNKEVTLASQGKKYEGAQTNDNGEEDDGGVYVFVHLSLQSKLQSRILSHLFQSAACKFREIKFVEIPANRAIENYPESNCPTLIVYYRGEVIKNMITLLELGGNNSKMEDFEDFMVKVGAVAEGDNRLIMNRDDEESREERKLHYGEKKSIRSGIRGKFNVGIGGNDDGNINDDDDGFFD.

Phosphoserine is present on residues Ser-35 and Ser-62. The tract at residues 96–286 is thioredoxin fold; sequence FGEVFHINKP…INDDDDGFFD (191 aa).

The protein belongs to the phosducin family. Interacts with the G protein beta-gamma subunit complex (STE4-STE18 complex). Interacts with CCT2; this interaction leads to inhibition of CCT complex mediated actin folding.

It is found in the cytoplasm. Functionally, essential for cell growth. Inhibits early G-protein signaling events following pheromone stimulation. Inhibits the folding activity of the chaperonin-containing T-complex (CCT) CCT2 which leads to inhibition of cytoskeletal actin folding. Plays a role in cell cycle progression in G1/S phase. This Saccharomyces cerevisiae (strain ATCC 204508 / S288c) (Baker's yeast) protein is Phosducin-like protein 2.